A 439-amino-acid polypeptide reads, in one-letter code: 3-phosphoshikimate 1-carboxyvinyltransferase (439 aa).

Positions 31, 32, and 36 each coordinate 3-phosphoshikimate. Lys-31 is a phosphoenolpyruvate binding site. Gly-103 and Arg-131 together coordinate phosphoenolpyruvate. Residues Ser-175, Gln-177, Asp-322, and Lys-349 each coordinate 3-phosphoshikimate. Gln-177 is a binding site for phosphoenolpyruvate. Asp-322 serves as the catalytic Proton acceptor. Residues Arg-353 and Arg-397 each contribute to the phosphoenolpyruvate site.

Belongs to the EPSP synthase family. Monomer.

The protein resides in the cytoplasm. It carries out the reaction 3-phosphoshikimate + phosphoenolpyruvate = 5-O-(1-carboxyvinyl)-3-phosphoshikimate + phosphate. It participates in metabolic intermediate biosynthesis; chorismate biosynthesis; chorismate from D-erythrose 4-phosphate and phosphoenolpyruvate: step 6/7. In terms of biological role, catalyzes the transfer of the enolpyruvyl moiety of phosphoenolpyruvate (PEP) to the 5-hydroxyl of shikimate-3-phosphate (S3P) to produce enolpyruvyl shikimate-3-phosphate and inorganic phosphate. The chain is 3-phosphoshikimate 1-carboxyvinyltransferase from Clostridium tetani (strain Massachusetts / E88).